Reading from the N-terminus, the 189-residue chain is DnaJ homolog subfamily C member 5G (189 aa).

The J domain occupies 17-98 (SLYAVLDLKK…KKRKIYDQHG (82 aa)). The disordered stretch occupies residues 154–189 (PEQDSGRKYQQNVQSQPPRSGAKCDFRSEENSEDDF). The span at 161 to 171 (KYQQNVQSQPP) shows a compositional bias: polar residues.

In terms of processing, palmitoylated. In terms of tissue distribution, testis specific.

It is found in the membrane. This Homo sapiens (Human) protein is DnaJ homolog subfamily C member 5G (DNAJC5G).